Here is a 324-residue protein sequence, read N- to C-terminus: NADH-ubiquinone oxidoreductase chain 1 (324 aa).

The next 8 helical transmembrane spans lie at Ile5–Phe25, Phe75–Leu95, Leu106–Gly126, Ile146–Phe166, Thr177–Ala197, Leu228–Phe248, Gln259–Ile279, and Phe299–Ser319.

Belongs to the complex I subunit 1 family.

It is found in the mitochondrion inner membrane. The catalysed reaction is a ubiquinone + NADH + 5 H(+)(in) = a ubiquinol + NAD(+) + 4 H(+)(out). Core subunit of the mitochondrial membrane respiratory chain NADH dehydrogenase (Complex I) that is believed to belong to the minimal assembly required for catalysis. Complex I functions in the transfer of electrons from NADH to the respiratory chain. The immediate electron acceptor for the enzyme is believed to be ubiquinone. In Squalus acanthias (Spiny dogfish), this protein is NADH-ubiquinone oxidoreductase chain 1 (MT-ND1).